Reading from the N-terminus, the 288-residue chain is Lipoyl synthase (288 aa).

Positions 39, 44, 50, 65, 69, 72, and 276 each coordinate [4Fe-4S] cluster. Residues 51-265 form the Radical SAM core domain; it reads WGKGTATFMI…KETGLKKGFE (215 aa).

It belongs to the radical SAM superfamily. Lipoyl synthase family. It depends on [4Fe-4S] cluster as a cofactor.

It localises to the cytoplasm. It catalyses the reaction [[Fe-S] cluster scaffold protein carrying a second [4Fe-4S](2+) cluster] + N(6)-octanoyl-L-lysyl-[protein] + 2 oxidized [2Fe-2S]-[ferredoxin] + 2 S-adenosyl-L-methionine + 4 H(+) = [[Fe-S] cluster scaffold protein] + N(6)-[(R)-dihydrolipoyl]-L-lysyl-[protein] + 4 Fe(3+) + 2 hydrogen sulfide + 2 5'-deoxyadenosine + 2 L-methionine + 2 reduced [2Fe-2S]-[ferredoxin]. The protein operates within protein modification; protein lipoylation via endogenous pathway; protein N(6)-(lipoyl)lysine from octanoyl-[acyl-carrier-protein]: step 2/2. Its function is as follows. Catalyzes the radical-mediated insertion of two sulfur atoms into the C-6 and C-8 positions of the octanoyl moiety bound to the lipoyl domains of lipoate-dependent enzymes, thereby converting the octanoylated domains into lipoylated derivatives. This is Lipoyl synthase from Bacteroides fragilis (strain ATCC 25285 / DSM 2151 / CCUG 4856 / JCM 11019 / LMG 10263 / NCTC 9343 / Onslow / VPI 2553 / EN-2).